Reading from the N-terminus, the 333-residue chain is tRNA dimethylallyltransferase (333 aa).

Residue 23–30 participates in ATP binding; that stretch reads GPTGAGKT. Position 25-30 (25-30) interacts with substrate; that stretch reads TGAGKT. 2 interaction with substrate tRNA regions span residues 53 to 56 and 177 to 181; these read DSAL and QRVQR.

Belongs to the IPP transferase family. As to quaternary structure, monomer. Mg(2+) serves as cofactor.

It catalyses the reaction adenosine(37) in tRNA + dimethylallyl diphosphate = N(6)-dimethylallyladenosine(37) in tRNA + diphosphate. Functionally, catalyzes the transfer of a dimethylallyl group onto the adenine at position 37 in tRNAs that read codons beginning with uridine, leading to the formation of N6-(dimethylallyl)adenosine (i(6)A). This is tRNA dimethylallyltransferase from Polynucleobacter asymbioticus (strain DSM 18221 / CIP 109841 / QLW-P1DMWA-1) (Polynucleobacter necessarius subsp. asymbioticus).